Reading from the N-terminus, the 428-residue chain is Serine--tRNA ligase (428 aa).

Position 231-233 (231-233 (TAE)) interacts with L-serine. ATP contacts are provided by residues 262–264 (RRE) and Val-278. Glu-285 contributes to the L-serine binding site. 349–352 (EVSS) lines the ATP pocket. An L-serine-binding site is contributed by Ser-384.

This sequence belongs to the class-II aminoacyl-tRNA synthetase family. Type-1 seryl-tRNA synthetase subfamily. As to quaternary structure, homodimer. The tRNA molecule binds across the dimer.

Its subcellular location is the cytoplasm. It carries out the reaction tRNA(Ser) + L-serine + ATP = L-seryl-tRNA(Ser) + AMP + diphosphate + H(+). It catalyses the reaction tRNA(Sec) + L-serine + ATP = L-seryl-tRNA(Sec) + AMP + diphosphate + H(+). It functions in the pathway aminoacyl-tRNA biosynthesis; selenocysteinyl-tRNA(Sec) biosynthesis; L-seryl-tRNA(Sec) from L-serine and tRNA(Sec): step 1/1. Its function is as follows. Catalyzes the attachment of serine to tRNA(Ser). Is also able to aminoacylate tRNA(Sec) with serine, to form the misacylated tRNA L-seryl-tRNA(Sec), which will be further converted into selenocysteinyl-tRNA(Sec). The protein is Serine--tRNA ligase of Chlamydia trachomatis serovar L2 (strain ATCC VR-902B / DSM 19102 / 434/Bu).